Here is a 394-residue protein sequence, read N- to C-terminus: Elongation factor Tu (394 aa).

In terms of domain architecture, tr-type G spans 10–204 (KPHINIGTIG…AVDDNIPTPE (195 aa)). The G1 stretch occupies residues 19–26 (GHVDHGKT). A GTP-binding site is contributed by 19–26 (GHVDHGKT). A Mg(2+)-binding site is contributed by Thr26. Residues 60–64 (GITIN) are G2. Residues 81-84 (DCPG) are G3. Residues 81 to 85 (DCPGH) and 136 to 139 (NKVD) contribute to the GTP site. Residues 136–139 (NKVD) form a G4 region. The G5 stretch occupies residues 174–176 (SAL).

It belongs to the TRAFAC class translation factor GTPase superfamily. Classic translation factor GTPase family. EF-Tu/EF-1A subfamily. As to quaternary structure, monomer.

The protein resides in the cytoplasm. It carries out the reaction GTP + H2O = GDP + phosphate + H(+). Its function is as follows. GTP hydrolase that promotes the GTP-dependent binding of aminoacyl-tRNA to the A-site of ribosomes during protein biosynthesis. This is Elongation factor Tu from Chlamydia pneumoniae (Chlamydophila pneumoniae).